The primary structure comprises 67 residues: Alpha-toxin Tf3 (67 aa).

Residues 2-63 (KDGYPVEGDN…EPTKTNGRCK (62 aa)) form the LCN-type CS-alpha/beta domain. Cystine bridges form between cysteine 12–cysteine 62, cysteine 16–cysteine 38, cysteine 24–cysteine 45, and cysteine 28–cysteine 47. Proline 64 bears the Proline amide mark.

It belongs to the long (4 C-C) scorpion toxin superfamily. Sodium channel inhibitor family. Alpha subfamily. In terms of tissue distribution, expressed by the venom gland.

It is found in the secreted. Functionally, alpha toxins bind voltage-independently at site-3 of sodium channels (Nav) and inhibit the inactivation of the activated channels, thereby blocking neuronal transmission. This Tityus fasciolatus (Central Brazilian scorpion) protein is Alpha-toxin Tf3.